The chain runs to 518 residues: Probable carboxypeptidase 2 (518 aa).

Positions M1–A21 are cleaved as a signal peptide. The N-linked (GlcNAc...) asparagine glycan is linked to N46. Residues P53–E76 are disordered. A Peptidase M14 domain is found at G71 to A351. A glycan (N-linked (GlcNAc...) asparagine) is linked at N116. Zn(2+) is bound by residues H136, E139, and H224. E322 (proton donor/acceptor) is an active-site residue. N-linked (GlcNAc...) asparagine glycosylation is found at N393 and N459.

It belongs to the peptidase M14 family. Requires Zn(2+) as cofactor.

It localises to the secreted. Its function is as follows. Extracellular metalloprotease that contributes to pathogenicity. The sequence is that of Probable carboxypeptidase 2 (MCPB) from Trichophyton verrucosum (strain HKI 0517).